The chain runs to 89 residues: Large ribosomal subunit protein eL34 (89 aa).

The segment at 1 to 32 (MPAPRFKSGSFKKISKRGPGNKTLTHHRRSKV) is disordered.

This sequence belongs to the eukaryotic ribosomal protein eL34 family.

The protein is Large ribosomal subunit protein eL34 of Methanococcus aeolicus (strain ATCC BAA-1280 / DSM 17508 / OCM 812 / Nankai-3).